Here is a 787-residue protein sequence, read N- to C-terminus: Zinc finger protein 227 (787 aa).

One can recognise a KRAB domain in the interval 23 to 94; sequence VTFKDVAVVF…ERETQRNGHS (72 aa). 18 consecutive C2H2-type zinc fingers follow at residues 243–275, 312–334, 340–362, 368–390, 396–418, 424–446, 452–474, 480–502, 508–530, 536–558, 564–586, 592–614, 620–642, 648–670, 676–698, 704–726, 732–754, and 760–782; these read HPCR…LQTH, YRCD…YRTH, YRCE…QRVH, YKCE…QRVH, YKCD…RRVH, YRCE…FRVH, YTCK…QNVH, FKCE…QRVH, YRCD…QVIH, YTCE…QRVH, YKCG…QRVH, YKCD…QRGH, HKCE…LSVH, and YKCN…QKVH.

This sequence belongs to the krueppel C2H2-type zinc-finger protein family.

The protein resides in the nucleus. Its function is as follows. May be involved in transcriptional regulation. This chain is Zinc finger protein 227 (ZNF227), found in Bos taurus (Bovine).